A 176-amino-acid chain; its full sequence is Large ribosomal subunit protein uL6 (176 aa).

Belongs to the universal ribosomal protein uL6 family. In terms of assembly, part of the 50S ribosomal subunit.

Its function is as follows. This protein binds to the 23S rRNA, and is important in its secondary structure. It is located near the subunit interface in the base of the L7/L12 stalk, and near the tRNA binding site of the peptidyltransferase center. The chain is Large ribosomal subunit protein uL6 from Burkholderia multivorans (strain ATCC 17616 / 249).